Reading from the N-terminus, the 150-residue chain is Large ribosomal subunit protein bL9 (150 aa).

This sequence belongs to the bacterial ribosomal protein bL9 family.

Its function is as follows. Binds to the 23S rRNA. The polypeptide is Large ribosomal subunit protein bL9 (Pediococcus pentosaceus (strain ATCC 25745 / CCUG 21536 / LMG 10740 / 183-1w)).